The following is a 138-amino-acid chain: Large ribosomal subunit protein uL16 (138 aa).

Positions 1-17 (MLIPRKVKHRKQHHPRQ) are enriched in basic residues. The interval 1 to 24 (MLIPRKVKHRKQHHPRQRGIASGG) is disordered.

The protein belongs to the universal ribosomal protein uL16 family. In terms of assembly, part of the 50S ribosomal subunit.

Functionally, binds 23S rRNA and is also seen to make contacts with the A and possibly P site tRNAs. The chain is Large ribosomal subunit protein uL16 from Mycolicibacterium gilvum (strain PYR-GCK) (Mycobacterium gilvum (strain PYR-GCK)).